The chain runs to 156 residues: Snaclec trimecetin subunit alpha (156 aa).

Positions 1–23 (MGRFIFVSFGLLVVFLSLSGTGA) are cleaved as a signal peptide. Intrachain disulfides connect Cys-25/Cys-36, Cys-53/Cys-150, and Cys-125/Cys-142. A C-type lectin domain is found at 32–151 (FRRYCYKPFK…CGERNLFMCK (120 aa)).

The protein belongs to the snaclec family. In terms of assembly, heterodimer of subunits alpha and beta; disulfide-linked. As to expression, expressed by the venom gland.

It localises to the secreted. Its function is as follows. Snaclec that induces platelet aggregation in either human platelet rich plasma (PRP) or washed platelet suspensions. It causes aggregation in a dose-dependent manner even in the absence of various platelet agonists such as ADP or von Willebrand factor (vWF). Interestingly, it does not induce aggregation in rabbit PRP. A monoclonal antibody against the platelet GPIb receptor blocks the aggregation induced by trimecetin, suggesting that it acts by binding to GPIb (GP1BA/GP1BB). This chain is Snaclec trimecetin subunit alpha, found in Protobothrops mucrosquamatus (Taiwan habu).